The chain runs to 425 residues: uncharacterized protein (425 aa).

12 helical membrane-spanning segments follow: residues 15 to 35, 48 to 68, 84 to 104, 107 to 127, 149 to 169, 174 to 194, 225 to 245, 271 to 291, 295 to 315, 331 to 351, 370 to 390, and 395 to 415; these read LICA…SQML, LIGA…WAPL, MLLS…FDPL, LGTV…QDIV, INAY…LAAI, TVFL…LFLA, VIQA…DSFA, ALWS…KLGI, LWLF…LAAF, VVIA…VAFM, LSAL…GAVG, and FWFC…VAPL.

It to E.coli AmpG and yeast YBR220c.

The protein resides in the cell inner membrane. This is an uncharacterized protein from Haemophilus influenzae (strain ATCC 51907 / DSM 11121 / KW20 / Rd).